A 445-amino-acid chain; its full sequence is Hydroxycinnamoyl-CoA:5-hydroxyanthranilate N-hydroxycinnamoyltransferase HHT4 (445 aa).

This sequence belongs to the plant acyltransferase family.

The enzyme catalyses 5-hydroxyanthranilate + (E)-4-coumaroyl-CoA = avenanthramide A + CoA. The catalysed reaction is 5-hydroxyanthranilate + (E)-caffeoyl-CoA = avenanthramide C + CoA. In terms of biological role, involved in the biosynthesis of avenanthramide phytoalexins, which are phenolic alkaloids found mainly in oats. Catalyzes the N-acylation of 5-hydroxyanthranilate with 4-coumaroyl-CoA or caffeoyl-CoA as acyl donors, forming avenanthramide A and avenanthramide C, respectively. Does not accept feruloyl-CoA as a substrate. The polypeptide is Hydroxycinnamoyl-CoA:5-hydroxyanthranilate N-hydroxycinnamoyltransferase HHT4 (Avena sativa (Oat)).